The sequence spans 590 residues: Ras-specific guanine nucleotide-releasing factor RalGPS2 (590 aa).

In terms of domain architecture, Ras-GEF spans 49-287 (TPEEYAGQIT…YKLSLKIEPG (239 aa)). Positions 288–319 (ASTPRSAASREDLAGPDIGASPQGGRKSSAAA) are disordered. S293, S296, and S308 each carry phosphoserine. The PXXP signature appears at 331–334 (PQTP). Position 333 is a phosphothreonine (T333). A phosphoserine mark is found at S336 and S350. The residue at position 368 (T368) is a Phosphothreonine. The tract at residues 380 to 413 (DSVMEPHAPSRGQAESSTLSSGISIGSSDGSELS) is disordered. S381 is modified (phosphoserine). Residues 394–410 (ESSTLSSGISIGSSDGS) show a composition bias toward low complexity. Phosphoserine is present on S429. Positions 464–576 (AVTIQGVLRR…WFKHLSAACQ (113 aa)) constitute a PH domain. Positions 466-590 (TIQGVLRRKT…QVPTNLMTFE (125 aa)) are required for stimulation of nucleotide exchange by RALA.

In terms of assembly, interacts with RALA. Interacts with the SH3 domains of GRB2 and PLCG1. In terms of tissue distribution, abundant in brain and testis.

The protein localises to the cytoplasm. Its subcellular location is the cell membrane. In terms of biological role, guanine nucleotide exchange factor for the small GTPase RALA. May be involved in cytoskeletal organization. May also be involved in the stimulation of transcription in a Ras-independent fashion. The sequence is that of Ras-specific guanine nucleotide-releasing factor RalGPS2 (Ralgps2) from Mus musculus (Mouse).